Here is a 206-residue protein sequence, read N- to C-terminus: Imidazoleglycerol-phosphate dehydratase (206 aa).

The segment at 1-21 is disordered; that stretch reads MTTPSTAPTPAPRKAEVSRNT.

This sequence belongs to the imidazoleglycerol-phosphate dehydratase family.

The protein localises to the cytoplasm. The catalysed reaction is D-erythro-1-(imidazol-4-yl)glycerol 3-phosphate = 3-(imidazol-4-yl)-2-oxopropyl phosphate + H2O. It participates in amino-acid biosynthesis; L-histidine biosynthesis; L-histidine from 5-phospho-alpha-D-ribose 1-diphosphate: step 6/9. The chain is Imidazoleglycerol-phosphate dehydratase from Polaromonas sp. (strain JS666 / ATCC BAA-500).